We begin with the raw amino-acid sequence, 316 residues long: Daunorubicin resistance ATP-binding protein DrrA3 (316 aa).

In terms of domain architecture, ABC transporter spans 6-236 (ITVDGAEKRY…TGGDRIDVVL (231 aa)). Residue 38–45 (GPNGAGKT) coordinates ATP.

This sequence belongs to the ABC transporter superfamily. Drug exporter-1 (DrugE1) (TC 3.A.1.105) family. The complex is probably composed of two ATP-binding proteins (DrrA3) and two transmembrane proteins (DrrB3).

It localises to the cell membrane. It catalyses the reaction daunorubicin(in) + ATP + H2O = daunorubicin(out) + ADP + phosphate + H(+). Part of the ABC transporter complex DrrA3B3 involved in daunorubicin efflux. Responsible for energy coupling to the transport system. Confers self-resistance to daunorubicin, an antibiotic produced by S.coeruleorubidus. The efficiency of DrrA3B3 to export daunorubicin is probably lower than that of DrrA1B1 or DrrA2B2. The polypeptide is Daunorubicin resistance ATP-binding protein DrrA3 (Streptomyces coeruleorubidus).